A 287-amino-acid polypeptide reads, in one-letter code: ATP synthase gamma chain (287 aa).

Belongs to the ATPase gamma chain family. In terms of assembly, F-type ATPases have 2 components, CF(1) - the catalytic core - and CF(0) - the membrane proton channel. CF(1) has five subunits: alpha(3), beta(3), gamma(1), delta(1), epsilon(1). CF(0) has three main subunits: a, b and c.

The protein resides in the cell inner membrane. Its function is as follows. Produces ATP from ADP in the presence of a proton gradient across the membrane. The gamma chain is believed to be important in regulating ATPase activity and the flow of protons through the CF(0) complex. In Escherichia coli (strain 55989 / EAEC), this protein is ATP synthase gamma chain.